A 44-amino-acid chain; its full sequence is uncharacterized protein (44 aa).

This is an uncharacterized protein from His1 virus (isolate Australia/Victoria) (His1V).